Consider the following 668-residue polypeptide: Phosphatidylinositol 4-phosphate 5-kinase type-1 gamma (668 aa).

The tract at residues 45–67 (SMTAQPGPGHGKKLGHRGVDASG) is disordered. The PIPK domain maps to 75-443 (TSSTLKGAIQ…RFFKFMSNTV (369 aa)). N6-acetyllysine occurs at positions 265 and 268. Arg-459 is subject to Asymmetric dimethylarginine; alternate. Omega-N-methylarginine; alternate is present on Arg-459. The segment covering 526 to 535 (TTLSSTSLSI) has biased composition (low complexity). Disordered stretches follow at residues 526–578 (TTLS…ITVQ) and 593–642 (EDAG…YFPT). Residue Ser-555 is modified to Phosphoserine. Tyr-639 carries the phosphotyrosine; by EGFR modification. The segment at 641 to 668 (PTDERSWVYSPLHYSAQAPPASDGESDT) is mediates interaction with TLN2. The residue at position 649 (Tyr-649) is a Phosphotyrosine; by CSK. The residue at position 650 (Ser-650) is a Phosphoserine; by CDK5, MAPK1 and CDK1. Residues Ser-662 and Ser-666 each carry the phosphoserine modification. At Thr-668 the chain carries Phosphothreonine.

In terms of assembly, interacts with TLN1. Interacts with TLN2; interaction stimulates 1-phosphatidylinositol-4-phosphate 5-kinase activity. May compete with beta-integrins for the same binding site on TLN1 and TLN2. Interacts with ARF6; interaction stimulates 1-phosphatidylinositol-4-phosphate 5-kinase activity. Interacts with AP2B1. Interacts with AP2M1; phosphorylation of PIP5K1C by CSK disrupts the interaction; clathrin competes with PIP5K1C. Interacts with CDH1. Interacts with CSK. Interacts with PLCG1; interaction is abolished upon EGF stimulation. Interacts with LAPTM4B; promotes SNX5 association with LAPTM4B; kinase activity of PIP5K1C is required; interaction is regulated by phosphatidylinositol 4,5-bisphosphate generated by PIP5K1C. Phosphorylation on Ser-650 negatively regulates binding to TLN2 and is strongly stimulated in mitosis. Phosphorylation on Tyr-649 is necessary for targeting to focal adhesions. Phosphorylation on Ser-650 and Tyr-649 are mutually exclusive. Phosphorylated by SYK and CSK. Tyrosine phosphorylation is enhanced by PTK2 signaling. Phosphorylated at Tyr-639 upon EGF stimulation. Some studies suggest that phosphorylation on Tyr-649 enhances binding to tailins (TLN1 and TLN2). According to PubMed:15738269 phosphorylation at Tyr-649 does not directly enhance binding to tailins (TLN1 and TLN2) but may act indirectly by inhibiting phosphorylation at Ser-650. Post-translationally, acetylation at Lys-265 and Lys-268 seems to decrease lipid 1-phosphatidylinositol-4-phosphate 5-kinase activity. Deacetylation of these sites by SIRT1 positively regulates the exocytosis of TSH-containing granules from pituitary cells. As to expression, isoform 1 is strongly expressed in brain and also detected in heart and lung. In terms of tissue distribution, isoform 2 is strongly expressed in pancreas and liver and in lesser quantities in brain, heart, lung and kidney. Isoform 3 is detected in large amounts in heart and large intestine, is also present in lung, pancreas and thyroid, and to a lesser extent in brain, stomach and kidney.

Its subcellular location is the cell membrane. It is found in the endomembrane system. The protein localises to the cytoplasm. The protein resides in the cell junction. It localises to the focal adhesion. Its subcellular location is the adherens junction. It is found in the cell projection. The protein localises to the ruffle membrane. The protein resides in the phagocytic cup. It localises to the uropodium. Its subcellular location is the nucleus. It carries out the reaction a 1,2-diacyl-sn-glycero-3-phospho-(1D-myo-inositol 4-phosphate) + ATP = a 1,2-diacyl-sn-glycero-3-phospho-(1D-myo-inositol-4,5-bisphosphate) + ADP + H(+). It catalyses the reaction 1-octadecanoyl-2-(5Z,8Z,11Z,14Z)-eicosatetraenoyl-sn-glycero-3-phospho-1D-myo-inositol 4-phosphate + ATP = 1-octadecanoyl-2-(5Z,8Z,11Z,14Z)-eicosatetraenoyl-sn-glycero-3-phospho-1D-myo-inositol 4,5-bisphosphate + ADP + H(+). The enzyme catalyses 1-octadecanoyl-2-(9Z)-octadecenoyl-sn-glycero-3-phospho-1D-myo-inositol 4-phosphate + ATP = 1-octadecanoyl-2-(9Z)-octadecenoyl-sn-glycero-3-phospho-1D-myo-inositol 4,5-bisphosphate + ADP + H(+). The catalysed reaction is 1-octadecanoyl-2-(9Z)-octadecenoyl-sn-glycero-3-phospho-1D-myo-inositol + ATP = 1-octadecanoyl-2-(9Z)-octadecenoyl-sn-glycero-3-phospho-1D-myo-inositol 5-phosphate + ADP + H(+). It carries out the reaction 1-octadecanoyl-2-(9Z,12Z)-octadecadienoyl-sn-glycero-3-phospho-1D-myo-inositol + ATP = 1-octadecanoyl-2-(9Z,12Z)-octadecadienoyl-sn-glycero-3-phospho-1D-myo-inositol 5-phosphate + ADP + H(+). It catalyses the reaction 1-octadecanoyl-2-(5Z,8Z,11Z,14Z-eicosatetraenoyl)-sn-glycero-3-phospho-(1D-myo-inositol) + ATP = 1-octadecanoyl-2-(5Z,8Z,11Z,14Z)-eicosatetraenoyl-sn-glycero-3-phospho-1D-myo-inositol 5-phosphate + ADP + H(+). The enzyme catalyses 1,2-di-(9Z,12Z)-octadecadienoyl-sn-glycero-3-phospho-1D-myo-inositol + ATP = 1,2-di(9Z,12Z)-octadecadienoyl-sn-glycero-3-phospho-1D-myo-inositol 5-phosphate + ADP + H(+). Its function is as follows. Catalyzes the phosphorylation of phosphatidylinositol 4-phosphate (PtdIns(4)P/PI4P) to form phosphatidylinositol 4,5-bisphosphate (PtdIns(4,5)P2/PIP2), a lipid second messenger that regulates several cellular processes such as signal transduction, vesicle trafficking, actin cytoskeleton dynamics, cell adhesion, and cell motility. PtdIns(4,5)P2 can directly act as a second messenger or can be utilized as a precursor to generate other second messengers: inositol 1,4,5-trisphosphate (IP3), diacylglycerol (DAG) or phosphatidylinositol-3,4,5-trisphosphate (PtdIns(3,4,5)P3/PIP3). PIP5K1A-mediated phosphorylation of PtdIns(4)P is the predominant pathway for PtdIns(4,5)P2 synthesis. Together with PIP5K1A, is required for phagocytosis, both enzymes regulating different types of actin remodeling at sequential steps. Promotes particle attachment by generating the pool of PtdIns(4,5)P2 that induces controlled actin depolymerization to facilitate Fc-gamma-R clustering. Mediates RAC1-dependent reorganization of actin filaments. Required for synaptic vesicle transport. Controls the plasma membrane pool of PtdIns(4,5)P2 implicated in synaptic vesicle endocytosis and exocytosis. Plays a role in endocytosis mediated by clathrin and AP-2 (adaptor protein complex 2). Required for clathrin-coated pits assembly at the synapse. Participates in cell junction assembly. Modulates adherens junctions formation by facilitating CDH1/cadherin trafficking. Required for focal adhesion dynamics. Modulates the targeting of talins (TLN1 and TLN2) to the plasma membrane and their efficient assembly into focal adhesions. Regulates the interaction between talins (TLN1 and TLN2) and beta-integrins. Required for uropodium formation and retraction of the cell rear during directed migration. Has a role in growth factor-stimulated directional cell migration and adhesion. Required for talin assembly into nascent adhesions forming at the leading edge toward the direction of the growth factor. Negative regulator of T-cell activation and adhesion. Negatively regulates integrin alpha-L/beta-2 (LFA-1) polarization and adhesion induced by T-cell receptor. Together with PIP5K1A has a role during embryogenesis and together with PIP5K1B may have a role immediately after birth. The polypeptide is Phosphatidylinositol 4-phosphate 5-kinase type-1 gamma (Homo sapiens (Human)).